Consider the following 428-residue polypeptide: Flotillin-2 (428 aa).

The N-myristoyl glycine moiety is linked to residue Gly2. Cys4 carries the S-palmitoyl cysteine; by ZDHHC5 lipid modification. A lipid anchor (S-palmitoyl cysteine) is attached at Cys19. A lipid anchor (S-palmitoyl cysteine; by ZDHHC5) is attached at Cys20. A Phosphoserine modification is found at Ser405.

Belongs to the band 7/mec-2 family. Flotillin subfamily. Heterooligomeric complex of flotillin-1 and flotillin-2 and caveolin-1 and caveolin-2. Interacts with ECPAS. Post-translationally, ZDHHC5-catalyzed palmitoylation predominantly occurs at Cys-4. ZDHHC5-catalyzed palmitoylation may be required for the formation of higher-order complexes and for neurite outgrowth in cultured neural stem cells. In skin, expressed in epidermis and epidermal appendages but not in dermis. Expressed in all layers of the epidermis except the basal layer. In hair follicles, expressed in the suprabasal layer but not the basal layer. Also expressed in melanoma and carcinoma cell lines, fibroblasts and foreskin melanocytes.

Its subcellular location is the cell membrane. The protein resides in the membrane. It localises to the caveola. It is found in the endosome. In terms of biological role, may act as a scaffolding protein within caveolar membranes, functionally participating in formation of caveolae or caveolae-like vesicles. May be involved in epidermal cell adhesion and epidermal structure and function. The chain is Flotillin-2 (FLOT2) from Homo sapiens (Human).